A 197-amino-acid polypeptide reads, in one-letter code: Protein GrpE (197 aa).

Over residues 1-31 the composition is skewed to basic and acidic residues; the sequence is MSDDTKKQDTAADAEVEKEMEGVPEHLRDDR. Residues 1–48 are disordered; the sequence is MSDDTKKQDTAADAEVEKEMEGVPEHLRDDRGSEEDASDDLSAALESL.

This sequence belongs to the GrpE family. As to quaternary structure, homodimer.

The protein resides in the cytoplasm. Participates actively in the response to hyperosmotic and heat shock by preventing the aggregation of stress-denatured proteins, in association with DnaK and GrpE. It is the nucleotide exchange factor for DnaK and may function as a thermosensor. Unfolded proteins bind initially to DnaJ; upon interaction with the DnaJ-bound protein, DnaK hydrolyzes its bound ATP, resulting in the formation of a stable complex. GrpE releases ADP from DnaK; ATP binding to DnaK triggers the release of the substrate protein, thus completing the reaction cycle. Several rounds of ATP-dependent interactions between DnaJ, DnaK and GrpE are required for fully efficient folding. This is Protein GrpE from Erythrobacter litoralis (strain HTCC2594).